The primary structure comprises 251 residues: Pyrroloquinoline-quinone synthase (251 aa).

Belongs to the PqqC family.

The catalysed reaction is 6-(2-amino-2-carboxyethyl)-7,8-dioxo-1,2,3,4,7,8-hexahydroquinoline-2,4-dicarboxylate + 3 O2 = pyrroloquinoline quinone + 2 H2O2 + 2 H2O + H(+). It functions in the pathway cofactor biosynthesis; pyrroloquinoline quinone biosynthesis. Ring cyclization and eight-electron oxidation of 3a-(2-amino-2-carboxyethyl)-4,5-dioxo-4,5,6,7,8,9-hexahydroquinoline-7,9-dicarboxylic-acid to PQQ. This is Pyrroloquinoline-quinone synthase from Pseudomonas savastanoi pv. phaseolicola (strain 1448A / Race 6) (Pseudomonas syringae pv. phaseolicola (strain 1448A / Race 6)).